A 1141-amino-acid chain; its full sequence is cGMP-inhibited 3',5'-cyclic phosphodiesterase 3A (1141 aa).

The disordered stretch occupies residues 1 to 42 (MAVRGEAAQDLAKPGLGGASPARVARGNHRHRGESSPSPRGS). The helical transmembrane segment at 62–82 (SALCAGSLSVLLALLVRLVGG) threads the bilayer. The interval 90-111 (KSQEAAAEEEEEEGARGGVFPG) is disordered. 5 consecutive transmembrane segments (helical) span residues 127-147 (LQPA…GLCL), 157-177 (AVAL…SLGV), 182-202 (LLSL…TWLV), 207-227 (LGVL…VSLE), and 229-249 (FKVA…LLLA). Ser-310 is modified (phosphoserine). Over residues 433–445 (RVSSTWTTTTSAT) the composition is skewed to low complexity. Residues 433-483 (RVSSTWTTTTSATGLPTLEPAPVRRDRSASIKPHEAPSPSAVNPDSWNAPG) form a disordered region. The segment covering 454–467 (PVRRDRSASIKPHE) has biased composition (basic and acidic residues). Residues 472–483 (SAVNPDSWNAPG) show a composition bias toward polar residues. A phosphoserine mark is found at Ser-492, Ser-520, Ser-524, and Ser-533. Residues 505–654 (VKAKKQNRPG…CQREPQRKAS (150 aa)) form a disordered region. Positions 522-532 (VPSPSSSPPQG) are enriched in pro residues. The span at 533 to 544 (SPASSPVSNSAS) shows a compositional bias: low complexity. The span at 618–637 (TSQVTSDYETNNNSDSSDIL) shows a compositional bias: polar residues. The tract at residues 669–1141 (KPILAPEPLV…EETLAPQPDL (473 aa)) is interaction with SLFN12. Residues 674–1093 (PEPLVMDNLD…MMWKKVIEEE (420 aa)) enclose the PDEase domain. His-752 functions as the Proton donor in the catalytic mechanism. Position 752 (His-752) interacts with AMP. 4 residues coordinate Mn(2+): His-756, His-836, Asp-837, and Asp-950. AMP is bound by residues Asp-837, Asp-950, and Gln-1001. Residue Asp-837 participates in Mg(2+) binding. Disordered regions lie at residues 1024-1060 (GKWV…SSIA) and 1120-1141 (KEEE…QPDL). The span at 1029–1046 (DSDDSGDTDDPEEEEEEA) shows a compositional bias: acidic residues. Ser-1033 carries the post-translational modification Phosphoserine. At Thr-1036 the chain carries Phosphothreonine. Residue Lys-1120 forms a Glycyl lysine isopeptide (Lys-Gly) (interchain with G-Cter in SUMO2) linkage.

This sequence belongs to the cyclic nucleotide phosphodiesterase family. PDE3 subfamily. Mn(2+) is required as a cofactor. Requires Mg(2+) as cofactor.

It is found in the membrane. It localises to the cytoplasm. Its subcellular location is the cytosol. The enzyme catalyses a nucleoside 3',5'-cyclic phosphate + H2O = a nucleoside 5'-phosphate + H(+). It carries out the reaction 3',5'-cyclic AMP + H2O = AMP + H(+). It catalyses the reaction 3',5'-cyclic GMP + H2O = GMP + H(+). The catalysed reaction is 3',5'-cyclic UMP + H2O = UMP + H(+). Its activity is regulated as follows. Inhibited by cGMP. In terms of biological role, cyclic nucleotide phosphodiesterase with specificity for the second messengers cAMP and cGMP, which are key regulators of many important physiological processes. Also has activity toward cUMP. Independently of its catalytic activity it is part of an E2/17beta-estradiol-induced pro-apoptotic signaling pathway. E2 stabilizes the PDE3A/SLFN12 complex in the cytosol, promoting the dephosphorylation of SLFN12 and activating its pro-apoptotic ribosomal RNA/rRNA ribonuclease activity. This apoptotic pathway might be relevant in tissues with high concentration of E2 and be for instance involved in placenta remodeling. This Mus musculus (Mouse) protein is cGMP-inhibited 3',5'-cyclic phosphodiesterase 3A.